The following is a 479-amino-acid chain: Glutamate--tRNA ligase (479 aa).

Residues 9–19 carry the 'HIGH' region motif; sequence PSPTGNLHIGT. The 'KMSKS' region signature appears at 243–247; it reads KLSKR. K246 contacts ATP.

The protein belongs to the class-I aminoacyl-tRNA synthetase family. Glutamate--tRNA ligase type 1 subfamily. As to quaternary structure, monomer.

The protein resides in the cytoplasm. It carries out the reaction tRNA(Glu) + L-glutamate + ATP = L-glutamyl-tRNA(Glu) + AMP + diphosphate. Its function is as follows. Catalyzes the attachment of glutamate to tRNA(Glu) in a two-step reaction: glutamate is first activated by ATP to form Glu-AMP and then transferred to the acceptor end of tRNA(Glu). In Synechococcus sp. (strain JA-3-3Ab) (Cyanobacteria bacterium Yellowstone A-Prime), this protein is Glutamate--tRNA ligase.